The sequence spans 216 residues: ATP-dependent Clp protease proteolytic subunit (216 aa).

Residue Ser101 is the Nucleophile of the active site. His126 is an active-site residue.

The protein belongs to the peptidase S14 family. Component of the chloroplastic Clp protease core complex.

It localises to the plastid. It is found in the chloroplast stroma. It carries out the reaction Hydrolysis of proteins to small peptides in the presence of ATP and magnesium. alpha-casein is the usual test substrate. In the absence of ATP, only oligopeptides shorter than five residues are hydrolyzed (such as succinyl-Leu-Tyr-|-NHMec, and Leu-Tyr-Leu-|-Tyr-Trp, in which cleavage of the -Tyr-|-Leu- and -Tyr-|-Trp bonds also occurs).. Its function is as follows. Cleaves peptides in various proteins in a process that requires ATP hydrolysis. Has a chymotrypsin-like activity. Plays a major role in the degradation of misfolded proteins. The polypeptide is ATP-dependent Clp protease proteolytic subunit (Zea mays (Maize)).